An 87-amino-acid polypeptide reads, in one-letter code: Small ribosomal subunit protein bS20 (87 aa).

Over residues 1–19 the composition is skewed to basic residues; the sequence is MANHKSALKRHRQSIKRNL. The disordered stretch occupies residues 1-22; it reads MANHKSALKRHRQSIKRNLRNN.

This sequence belongs to the bacterial ribosomal protein bS20 family.

Binds directly to 16S ribosomal RNA. The polypeptide is Small ribosomal subunit protein bS20 (Maridesulfovibrio salexigens (strain ATCC 14822 / DSM 2638 / NCIMB 8403 / VKM B-1763) (Desulfovibrio salexigens)).